A 51-amino-acid polypeptide reads, in one-letter code: Small ribosomal subunit protein eS31 (51 aa).

C22, C25, C40, and C43 together coordinate Zn(2+). Residues C22–C43 form a C4-type zinc finger.

Belongs to the eukaryotic ribosomal protein eS31 family. As to quaternary structure, part of the 30S ribosomal subunit. The cofactor is Zn(2+).

The chain is Small ribosomal subunit protein eS31 from Pyrococcus abyssi (strain GE5 / Orsay).